A 154-amino-acid chain; its full sequence is Endoribonuclease YbeY (154 aa).

The Zn(2+) site is built by H113, H117, and H123.

The protein belongs to the endoribonuclease YbeY family. It depends on Zn(2+) as a cofactor.

It is found in the cytoplasm. Single strand-specific metallo-endoribonuclease involved in late-stage 70S ribosome quality control and in maturation of the 3' terminus of the 16S rRNA. This chain is Endoribonuclease YbeY, found in Ehrlichia chaffeensis (strain ATCC CRL-10679 / Arkansas).